A 1305-amino-acid polypeptide reads, in one-letter code: Cyclin-G-associated kinase (1305 aa).

Position 2 is an N-acetylserine (serine 2). 2 positions are modified to phosphoserine: serine 2 and serine 16. A Protein kinase domain is found at 40–317 (LRVRRVLAEG…EVVRQLQEIA (278 aa)). ATP is bound by residues 46 to 54 (LAEGGFAFV) and lysine 69. Residue aspartate 173 is the Proton acceptor of the active site. Residues 397–564 (SVANYAKGDL…EYVCDMVAEE (168 aa)) enclose the Phosphatase tensin-type domain. Serine 454 bears the Phosphoserine mark. The 139-residue stretch at 570-708 (SKPMLVKSVV…FQVNLEVEVE (139 aa)) folds into the C2 tensin-type domain. Disordered regions lie at residues 707 to 732 (VEPR…NPKI) and 747 to 854 (FGKP…AAGT). A Phosphoserine modification is found at serine 768. A Phosphothreonine modification is found at threonine 774. The segment covering 776–789 (SDSPQSSSTDTNHF) has biased composition (polar residues). Serine 781 carries the post-translational modification Phosphoserine. The residue at position 792 (threonine 792) is a Phosphothreonine. Polar residues predominate over residues 805 to 816 (LDNTSPKESQSV). 3 positions are modified to phosphoserine: serine 809, serine 824, and serine 827. Positions 822 to 832 (DGSEVSDEEEA) are enriched in acidic residues. Residues 836-848 (SEERKPGAGEDTP) show a composition bias toward basic and acidic residues. Phosphoserine is present on serine 938. The segment at 1037–1139 (DTWADTATPG…WTPQAKPAPR (103 aa)) is disordered. Over residues 1084-1099 (DLSDLSSSLQGLPAGL) the composition is skewed to low complexity. Positions 1111–1132 (TQKSNSPWQANRPTAPGTSWTP) are enriched in polar residues. Arginine 1122 carries the post-translational modification Omega-N-methylarginine. Phosphoserine is present on serine 1171. Residues 1241 to 1305 (SRWTPVSMAD…FENQGSRPLF (65 aa)) enclose the J domain.

This sequence belongs to the protein kinase superfamily. Ser/Thr protein kinase family.

Its subcellular location is the cytoplasm. It localises to the perinuclear region. The protein resides in the golgi apparatus. The protein localises to the trans-Golgi network. It is found in the cell junction. Its subcellular location is the focal adhesion. It localises to the cytoplasmic vesicle. The protein resides in the clathrin-coated vesicle. The catalysed reaction is L-seryl-[protein] + ATP = O-phospho-L-seryl-[protein] + ADP + H(+). It carries out the reaction L-threonyl-[protein] + ATP = O-phospho-L-threonyl-[protein] + ADP + H(+). In terms of biological role, associates with cyclin G and CDK5. Seems to act as an auxilin homolog that is involved in the uncoating of clathrin-coated vesicles by Hsc70 in non-neuronal cells. Expression oscillates slightly during the cell cycle, peaking at G1. May play a role in clathrin-mediated endocytosis and intracellular trafficking, and in the dynamics of clathrin assembly/disassembly. The protein is Cyclin-G-associated kinase of Mus musculus (Mouse).